A 201-amino-acid polypeptide reads, in one-letter code: Probable chemoreceptor glutamine deamidase CheD 1 (201 aa).

Belongs to the CheD family.

The catalysed reaction is L-glutaminyl-[protein] + H2O = L-glutamyl-[protein] + NH4(+). Probably deamidates glutamine residues to glutamate on methyl-accepting chemotaxis receptors (MCPs), playing an important role in chemotaxis. This Geobacter sulfurreducens (strain ATCC 51573 / DSM 12127 / PCA) protein is Probable chemoreceptor glutamine deamidase CheD 1.